Consider the following 388-residue polypeptide: Putative 8-amino-7-oxononanoate synthase (388 aa).

Residue R18 participates in substrate binding. 105 to 106 (GY) lines the pyridoxal 5'-phosphate pocket. Position 130 (H130) interacts with substrate. Residues S176, 201 to 204 (DDAH), and 232 to 235 (TLSK) contribute to the pyridoxal 5'-phosphate site. The residue at position 235 (K235) is an N6-(pyridoxal phosphate)lysine. Residue T349 coordinates substrate.

This sequence belongs to the class-II pyridoxal-phosphate-dependent aminotransferase family. BioF subfamily. Homodimer. Pyridoxal 5'-phosphate is required as a cofactor.

The enzyme catalyses 6-carboxyhexanoyl-[ACP] + L-alanine + H(+) = (8S)-8-amino-7-oxononanoate + holo-[ACP] + CO2. Its pathway is cofactor biosynthesis; biotin biosynthesis. Its function is as follows. Catalyzes the decarboxylative condensation of pimeloyl-[acyl-carrier protein] and L-alanine to produce 8-amino-7-oxononanoate (AON), [acyl-carrier protein], and carbon dioxide. In Acetivibrio thermocellus (strain ATCC 27405 / DSM 1237 / JCM 9322 / NBRC 103400 / NCIMB 10682 / NRRL B-4536 / VPI 7372) (Clostridium thermocellum), this protein is Putative 8-amino-7-oxononanoate synthase (bioF).